The chain runs to 294 residues: ATP phosphoribosyltransferase (294 aa).

This sequence belongs to the ATP phosphoribosyltransferase family. Long subfamily. The cofactor is Mg(2+).

The protein localises to the cytoplasm. It carries out the reaction 1-(5-phospho-beta-D-ribosyl)-ATP + diphosphate = 5-phospho-alpha-D-ribose 1-diphosphate + ATP. Its pathway is amino-acid biosynthesis; L-histidine biosynthesis; L-histidine from 5-phospho-alpha-D-ribose 1-diphosphate: step 1/9. With respect to regulation, feedback inhibited by histidine. Functionally, catalyzes the condensation of ATP and 5-phosphoribose 1-diphosphate to form N'-(5'-phosphoribosyl)-ATP (PR-ATP). Has a crucial role in the pathway because the rate of histidine biosynthesis seems to be controlled primarily by regulation of HisG enzymatic activity. The protein is ATP phosphoribosyltransferase of Chlorobium luteolum (strain DSM 273 / BCRC 81028 / 2530) (Pelodictyon luteolum).